Reading from the N-terminus, the 146-residue chain is Prostaglandin E synthase 3 (146 aa).

Positions 1-76 constitute a CS domain; sequence VFIEFCVEDS…ESGQAWPRLT (76 aa). The tract at residues 110 to 146 is disordered; that stretch reads SEMMNNMGGDDDVDLPEVDGADDDSPDSDDEKMPDLE. Residues 118 to 139 show a composition bias toward acidic residues; sequence GDDDVDLPEVDGADDDSPDSDD.

It belongs to the p23/wos2 family. Binds to telomerase. Binds to the progesterone receptor.

It localises to the cytoplasm. The enzyme catalyses prostaglandin H2 = prostaglandin E2. It participates in lipid metabolism; prostaglandin biosynthesis. Molecular chaperone. This is Prostaglandin E synthase 3 (PTGES3) from Gallus gallus (Chicken).